A 675-amino-acid chain; its full sequence is Heat shock 70 kDa protein, mitochondrial (675 aa).

Residues 1 to 51 (MAAVLRSLRRRDVASATFSAYRSLTGSTKPAYVAQKWSCLARPFSSRPAGN) constitute a mitochondrion transit peptide. A disordered region spans residues 638 to 675 (VSKIGEHMSGGSSGGSSAGGSQGGGDQAPEAEYEEVKK). Positions 648–663 (GSSGGSSAGGSQGGGD) are enriched in gly residues. The span at 666–675 (PEAEYEEVKK) shows a compositional bias: acidic residues.

This sequence belongs to the heat shock protein 70 family.

The protein resides in the mitochondrion. The polypeptide is Heat shock 70 kDa protein, mitochondrial (Phaseolus vulgaris (Kidney bean)).